We begin with the raw amino-acid sequence, 628 residues long: Kinesin-like protein KIN-10B (628 aa).

A Kinesin motor domain is found at 20–340; it reads NVRVVLRVRP…VSLAARSRHI (321 aa). Position 114-121 (114-121) interacts with ATP; sequence GATGSGKT. The tract at residues 496–519 is disordered; it reads SPIDSNAKPNSAHGSSPFLKPMTP. Positions 498–509 are enriched in polar residues; sequence IDSNAKPNSAHG.

The protein belongs to the TRAFAC class myosin-kinesin ATPase superfamily. Kinesin family. KIN-10 subfamily.

The polypeptide is Kinesin-like protein KIN-10B (Arabidopsis thaliana (Mouse-ear cress)).